Here is a 429-residue protein sequence, read N- to C-terminus: Kynureninase (429 aa).

Pyridoxal 5'-phosphate is bound by residues Leu109, Thr110, Phe137 to Asp140, Asp222, His225, and Tyr247. Lys248 bears the N6-(pyridoxal phosphate)lysine mark. Trp278 and Asn306 together coordinate pyridoxal 5'-phosphate.

This sequence belongs to the kynureninase family. Homodimer. Requires pyridoxal 5'-phosphate as cofactor.

It carries out the reaction L-kynurenine + H2O = anthranilate + L-alanine + H(+). The enzyme catalyses 3-hydroxy-L-kynurenine + H2O = 3-hydroxyanthranilate + L-alanine + H(+). It participates in amino-acid degradation; L-kynurenine degradation; L-alanine and anthranilate from L-kynurenine: step 1/1. It functions in the pathway cofactor biosynthesis; NAD(+) biosynthesis; quinolinate from L-kynurenine: step 2/3. Functionally, catalyzes the cleavage of L-kynurenine (L-Kyn) and L-3-hydroxykynurenine (L-3OHKyn) into anthranilic acid (AA) and 3-hydroxyanthranilic acid (3-OHAA), respectively. The sequence is that of Kynureninase from Salinispora tropica (strain ATCC BAA-916 / DSM 44818 / JCM 13857 / NBRC 105044 / CNB-440).